The primary structure comprises 500 residues: Centrosomal protein of 57 kDa (500 aa).

Low complexity predominate over residues 1 to 17 (MAAASVSAASGSHLSNS). 2 disordered regions span residues 1–34 (MAAA…HSSS) and 43–62 (KPFL…LAYP). Polar residues predominate over residues 18-34 (FAEPSRSNGSMVRHSSS). Phosphoserine occurs at positions 53 and 55. Residues 58-239 (TLAYPESNSR…KAAELQTGLE (182 aa)) are centrosome localization domain (CLD). Coiled-coil stretches lie at residues 63–242 (ESNS…ETNR) and 392–492 (ELKD…NSLQ). The tract at residues 277–491 (GAQPHYRLCL…KDMQSIQNSL (215 aa)) is mediates interaction with microtubules. Residues 434–450 (KKELKATKKTLDEERNS) show a composition bias toward basic and acidic residues. The interval 434-472 (KKELKATKKTLDEERNSSSRSGITGTTNKKDFMKLRPGE) is disordered. The span at 451-460 (SSRSGITGTT) shows a compositional bias: polar residues. The span at 461 to 471 (NKKDFMKLRPG) shows a compositional bias: basic and acidic residues.

This sequence belongs to the translokin family. Homodimer and homooligomer. Interacts with microtubules. Interacts with FGF2 and RAP80. Does not interact with FGF1 or FGF2 isoform 24 kDa. As to expression, ubiquitous.

Its subcellular location is the nucleus. The protein localises to the cytoplasm. The protein resides in the cytoskeleton. It is found in the microtubule organizing center. It localises to the centrosome. Its function is as follows. Centrosomal protein which may be required for microtubule attachment to centrosomes. May act by forming ring-like structures around microtubules. Mediates nuclear translocation and mitogenic activity of the internalized growth factor FGF2, but that of FGF1. In Homo sapiens (Human), this protein is Centrosomal protein of 57 kDa (CEP57).